The sequence spans 198 residues: FMN-dependent NADH:quinone oxidoreductase (198 aa).

FMN is bound by residues S10 and 16 to 18; that span reads SIS.

Belongs to the azoreductase type 1 family. Homodimer. Requires FMN as cofactor.

The enzyme catalyses 2 a quinone + NADH + H(+) = 2 a 1,4-benzosemiquinone + NAD(+). The catalysed reaction is N,N-dimethyl-1,4-phenylenediamine + anthranilate + 2 NAD(+) = 2-(4-dimethylaminophenyl)diazenylbenzoate + 2 NADH + 2 H(+). Functionally, quinone reductase that provides resistance to thiol-specific stress caused by electrophilic quinones. Also exhibits azoreductase activity. Catalyzes the reductive cleavage of the azo bond in aromatic azo compounds to the corresponding amines. The polypeptide is FMN-dependent NADH:quinone oxidoreductase (Mycoplasmopsis pulmonis (strain UAB CTIP) (Mycoplasma pulmonis)).